Consider the following 435-residue polypeptide: tRNA(Ile)-lysidine synthase (435 aa).

Position 24–29 (24–29 (SGGLDS)) interacts with ATP.

The protein belongs to the tRNA(Ile)-lysidine synthase family.

Its subcellular location is the cytoplasm. It catalyses the reaction cytidine(34) in tRNA(Ile2) + L-lysine + ATP = lysidine(34) in tRNA(Ile2) + AMP + diphosphate + H(+). In terms of biological role, ligates lysine onto the cytidine present at position 34 of the AUA codon-specific tRNA(Ile) that contains the anticodon CAU, in an ATP-dependent manner. Cytidine is converted to lysidine, thus changing the amino acid specificity of the tRNA from methionine to isoleucine. The sequence is that of tRNA(Ile)-lysidine synthase from Chromobacterium violaceum (strain ATCC 12472 / DSM 30191 / JCM 1249 / CCUG 213 / NBRC 12614 / NCIMB 9131 / NCTC 9757 / MK).